The sequence spans 86 residues: Neuropeptide-like 3 (86 aa).

The first 16 residues, 1 to 16 (MFKLCVFVALLSLAAA), serve as a signal peptide directing secretion. 2 propeptides span residues 17–50 (APAP…VAPQ) and 63–75 (AITQ…LLIK). Isoleucine amide is present on isoleucine 85.

The protein resides in the secreted. The sequence is that of Neuropeptide-like 3 (Nplp3) from Drosophila yakuba (Fruit fly).